We begin with the raw amino-acid sequence, 3146 residues long: Bassianolide nonribosomal cyclodepsipeptide synthetase (3146 aa).

A compositionally biased stretch (polar residues) spans 1–12; sequence MEPPNNANTGQL. The tract at residues 1-23 is disordered; the sequence is MEPPNNANTGQLGPTLPNGTVDL. The interval 69 to 454 is condensation 1; sequence HVVYEIPEDV…INKLQSTDGS (386 aa). The adenylation 1 stretch occupies residues 495–887; that stretch reads GDTPNKPAVC…GRMDSQVKIR (393 aa). The Carrier 1 domain occupies 1015 to 1091; sequence PDASAGVTKL…SLQAAIGGSS (77 aa). Serine 1052 bears the O-(pantetheine 4'-phosphoryl)serine mark. The tract at residues 1109 to 1538 is condensation 2; the sequence is SYSQGRLWFL…QTLISVVPLT (430 aa). An adenylation 2 region spans residues 1567-1973; it reads FRTQVASYPD…GRMDFQFKIR (407 aa). The segment at 2041–2181 is S-adenosyl-L-methionine-dependent N-methyltransferase (MT); sequence TYTELDTVSS…FPTRDYLERV (141 aa). 2 consecutive Carrier domains span residues 2514 to 2588 and 2614 to 2688; these read FPLS…RQQL and APTT…EVSQ. O-(pantetheine 4'-phosphoryl)serine occurs at positions 2548 and 2648. Positions 2734–3138 are condensation 3; it reads QDVYLATHLQ…THLMEQVCNT (405 aa).

This sequence belongs to the NRP synthetase family.

The enzyme catalyses 4 (R)-2-hydroxy-3-methylbutanoate + 4 L-leucine + 4 S-adenosyl-L-methionine + 8 ATP = bassianolide + 8 AMP + 4 S-adenosyl-L-homocysteine + 8 diphosphate + 8 H(+). Bassianolide nonribosomal synthetase that mediates the biosynthesis of bassianolide (BSL), a non-ribosomal cyclodepsipeptide that shows insecticidal and cancer cell antiproliferative activity. BSLS first catalyzes the iterative synthesis of an enzyme-bound dipeptidol monomer intermediate from D-2-hydroxyisovalerate and L-leucine before performing the condensation and cyclization of 4 dipeptidol monomers to yield the cyclic tetrameric ester bassianolide. The N-methyltransferase MT domain is responsible for the methylation of the leucine residues of bassianolide. BSLS is flexible with both the amino acid and hydroxyl acid precursors, and produces bassianolide as the major product (containing N-methyl-L-Leu), together with small amounts of beauvericin and its analogs beauvericins A-C (containing N-methyl-L-Phe). The chain is Bassianolide nonribosomal cyclodepsipeptide synthetase from Beauveria bassiana (White muscardine disease fungus).